The chain runs to 247 residues: Probable transcriptional regulatory protein LPC_0711 (247 aa).

The protein belongs to the TACO1 family.

Its subcellular location is the cytoplasm. This chain is Probable transcriptional regulatory protein LPC_0711, found in Legionella pneumophila (strain Corby).